A 729-amino-acid chain; its full sequence is Ran-binding protein 9 (729 aa).

Residues 1-11 are compositionally biased toward pro residues; it reads MSGQPPPPPPQ. Residues 1–137 are disordered; that stretch reads MSGQPPPPPP…SAAAPFPHGD (137 aa). The segment covering 27–49 has biased composition (low complexity); the sequence is LAPVSGVVLPAPPAVSAGSSPAG. Gly residues predominate over residues 50–60; it reads SPGGGAGGEGL. Residues 70–93 are compositionally biased toward pro residues; the sequence is HPPPPPPPATAAPPPPPPPPPPPA. Residues 107-126 are compositionally biased toward low complexity; that stretch reads GLAAGPGPAGGAPTPALVAG. The region spanning 147–334 is the B30.2/SPRY domain; the sequence is LQRRLKRLYP…VDANFGQHPF (188 aa). Residues 365 to 397 enclose the LisH domain; that stretch reads WQTMIQKMVSSYLVHHGYCATAEAFARSTDQTV. An interaction with CALB1 region spans residues 401-407; the sequence is LASIKNR. The 58-residue stretch at 403 to 460 folds into the CTLH domain; sequence SIKNRQRIQKLVLAGRMGEAIETTQQLYPSLLERNPNLLFTLKVRQFIEMVNGTDSEV. Lys-405 is subject to N6-acetyllysine. The interval 461 to 489 is disordered; sequence RCLGGRSPKSQDSYPVSPRPFSSPSMSPS. Over residues 473–489 the composition is skewed to low complexity; it reads SYPVSPRPFSSPSMSPS. 2 positions are modified to phosphoserine: Ser-477 and Ser-487. The interaction with FMR1 stretch occupies residues 615–729; sequence AAIERMIHFG…AFATVEDYLH (115 aa).

The protein belongs to the RANBP9/10 family. As to quaternary structure, part of a complex consisting of RANBP9, MKLN1 and GID8. Identified in the CTLH complex that contains GID4, RANBP9 and/or RANBP10, MKLN1, MAEA, RMND5A (or alternatively its paralog RMND5B), GID8, ARMC8, WDR26 and YPEL5. Within this complex, MAEA, RMND5A (or alternatively its paralog RMND5B), GID8, WDR26, and RANBP9 and/or RANBP10 form the catalytic core, while GID4, MKLN1, ARMC8 and YPEL5 have ancillary roles. Interacts with GTP-bound Ran, AR, CDC2L1/p110C, CALB1, S100A7, USP11, MKLN1, SOS1 or SOS2, GID8, and FMR1. Interacts with the Dyrk kinases HIPK2, DYRK1A, and DYRK1B. Interacts with TP73 isoform Alpha but not with TP53. Interacts with the HGF receptor MET and the integrins ITGB1 and ITGB2, but not with ITGAL. Part of a complex consisting of RANBP9, RAN, DYRK1B and COPS5. Directly interacts with RANBP10. Interacts with YPEL5. Interacts with DDX4. Interacts with NGFR. Interacts with TEX19. Phosphorylated in response to stress. Can be phosphorylated by the cleaved p110 form of CDC2L1 (p110C). In terms of processing, ubiquitinated. Polyubiquitination targets the protein for rapid degradation via the ubiquitin system. Can be deubiquitinated by USP11. As to expression, ubiquitously expressed, with highest levels in testes, placenta, heart, and muscle, and lowest levels in lung. Within the brain, expressed predominantly by neurons in the gray matter of cortex, the granular layer of cerebellum and the Purkinje cells.

Its subcellular location is the cytoplasm. It localises to the nucleus. It is found in the cell membrane. Functionally, may act as scaffolding protein, and as adapter protein to couple membrane receptors to intracellular signaling pathways. Acts as a mediator of cell spreading and actin cytoskeleton rearrangement. Core component of the CTLH E3 ubiquitin-protein ligase complex that selectively accepts ubiquitin from UBE2H and mediates ubiquitination and subsequent proteasomal degradation of the transcription factor HBP1. May be involved in signaling of ITGB2/LFA-1 and other integrins. Enhances HGF-MET signaling by recruiting Sos and activating the Ras pathway. Enhances dihydrotestosterone-induced transactivation activity of AR, as well as dexamethasone-induced transactivation activity of NR3C1, but not affect estrogen-induced transactivation. Stabilizes TP73 isoform Alpha, probably by inhibiting its ubiquitination, and increases its proapoptotic activity. Inhibits the kinase activity of DYRK1A and DYRK1B. Inhibits FMR1 binding to RNA. This chain is Ran-binding protein 9 (RANBP9), found in Homo sapiens (Human).